The sequence spans 510 residues: 2,3-bisphosphoglycerate-independent phosphoglycerate mutase (510 aa).

Aspartate 13 and serine 63 together coordinate Mn(2+). Serine 63 functions as the Phosphoserine intermediate in the catalytic mechanism. Residues histidine 124, 154 to 155, arginine 186, arginine 192, 262 to 265, and lysine 334 each bind substrate; these read RD and RADR. Residues aspartate 401, histidine 405, aspartate 442, histidine 443, and histidine 461 each contribute to the Mn(2+) site.

Belongs to the BPG-independent phosphoglycerate mutase family. As to quaternary structure, monomer. Mn(2+) serves as cofactor.

The catalysed reaction is (2R)-2-phosphoglycerate = (2R)-3-phosphoglycerate. It functions in the pathway carbohydrate degradation; glycolysis; pyruvate from D-glyceraldehyde 3-phosphate: step 3/5. Its function is as follows. Catalyzes the interconversion of 2-phosphoglycerate and 3-phosphoglycerate. This Aliivibrio fischeri (strain ATCC 700601 / ES114) (Vibrio fischeri) protein is 2,3-bisphosphoglycerate-independent phosphoglycerate mutase.